We begin with the raw amino-acid sequence, 516 residues long: Signal recognition particle protein (516 aa).

GTP contacts are provided by residues Gly-108–Thr-115, Asp-191–Arg-195, and Thr-249–Asp-252. Residues Met-383–Gly-405 are disordered.

It belongs to the GTP-binding SRP family. SRP54 subfamily. As to quaternary structure, part of the signal recognition particle protein translocation system, which is composed of SRP and FtsY.

The protein resides in the cytoplasm. The enzyme catalyses GTP + H2O = GDP + phosphate + H(+). In terms of biological role, involved in targeting and insertion of nascent membrane proteins into the cytoplasmic membrane. Binds to the hydrophobic signal sequence of the ribosome-nascent chain (RNC) as it emerges from the ribosomes. The SRP-RNC complex is then targeted to the cytoplasmic membrane where it interacts with the SRP receptor FtsY. In Streptococcus mutans serotype c (strain ATCC 700610 / UA159), this protein is Signal recognition particle protein.